A 466-amino-acid polypeptide reads, in one-letter code: Tetratricopeptide repeat protein 38 (466 aa).

TPR repeat units lie at residues 175–212, 251–284, and 368–400; these read MPLY…TPED, CHNY…RCVK, and LQIA…LKPI.

Belongs to the TTC38 family.

The protein is Tetratricopeptide repeat protein 38 (ttc38) of Danio rerio (Zebrafish).